A 195-amino-acid polypeptide reads, in one-letter code: Penicillin-binding protein activator LpoB (195 aa).

A signal peptide spans 1–16 (MKKRALIVLAALVLAS). The N-palmitoyl cysteine moiety is linked to residue cysteine 17. Residue cysteine 17 is the site of S-diacylglycerol cysteine attachment. The tract at residues 19–51 (SRKPASPPAPIEPVPPPVTVSVQPPPPATSEPV) is disordered. The span at 23–51 (ASPPAPIEPVPPPVTVSVQPPPPATSEPV) shows a compositional bias: pro residues.

This sequence belongs to the LpoB family. Interacts with PBP1b.

The protein resides in the cell outer membrane. Functionally, regulator of peptidoglycan synthesis that is essential for the function of penicillin-binding protein 1B (PBP1b). The chain is Penicillin-binding protein activator LpoB from Sodalis glossinidius (strain morsitans).